The primary structure comprises 109 residues: Large ribosomal subunit protein uL24 (109 aa).

The segment at 1–24 is disordered; the sequence is MANVTTDIKRNDTVAVTSGKDKGK.

The protein belongs to the universal ribosomal protein uL24 family. Part of the 50S ribosomal subunit.

In terms of biological role, one of two assembly initiator proteins, it binds directly to the 5'-end of the 23S rRNA, where it nucleates assembly of the 50S subunit. Its function is as follows. One of the proteins that surrounds the polypeptide exit tunnel on the outside of the subunit. In Koribacter versatilis (strain Ellin345), this protein is Large ribosomal subunit protein uL24.